Reading from the N-terminus, the 341-residue chain is Enduracididine beta-hydroxylase (341 aa).

Fe cation-binding residues include histidine 146 and glutamate 148. The tract at residues 203 to 223 (HRIHGKAPGDESARESALRER) is disordered. Residue histidine 300 participates in Fe cation binding.

It belongs to the clavaminate synthase family. Fe(2+) is required as a cofactor.

The enzyme catalyses L-enduracididine + 2-oxoglutarate + O2 = (3S)-3-hydroxy-L-enduracididine + succinate + CO2. It functions in the pathway antibiotic biosynthesis. Functionally, hydroxylates the beta carbon of free L-enduracididine to produce (3S)-3-hydroxy-L-enduracididine in biosynthesis of the nonproteinogenic amino acid beta-hydroxyenduracididine, a component of antibiotic mannopeptimycin. The chain is Enduracididine beta-hydroxylase (mppO) from Streptomyces hygroscopicus.